Reading from the N-terminus, the 60-residue chain is Large ribosomal subunit protein uL30 (60 aa).

This sequence belongs to the universal ribosomal protein uL30 family. Part of the 50S ribosomal subunit.

The polypeptide is Large ribosomal subunit protein uL30 (Kineococcus radiotolerans (strain ATCC BAA-149 / DSM 14245 / SRS30216)).